We begin with the raw amino-acid sequence, 119 residues long: Large ribosomal subunit protein bL20 (119 aa).

This sequence belongs to the bacterial ribosomal protein bL20 family.

Its function is as follows. Binds directly to 23S ribosomal RNA and is necessary for the in vitro assembly process of the 50S ribosomal subunit. It is not involved in the protein synthesizing functions of that subunit. The chain is Large ribosomal subunit protein bL20 from Verminephrobacter eiseniae (strain EF01-2).